Here is a 212-residue protein sequence, read N- to C-terminus: Pyridoxine/pyridoxamine 5'-phosphate oxidase (212 aa).

Residues 57–62 (RMVLLK), 72–73 (YT), arginine 78, lysine 79, and glutamine 101 contribute to the FMN site. Residue lysine 62 participates in substrate binding. Residues tyrosine 119, arginine 123, and serine 127 each coordinate substrate. FMN contacts are provided by residues 136 to 137 (QS) and tryptophan 181. 187 to 189 (RLH) serves as a coordination point for substrate. Arginine 191 serves as a coordination point for FMN.

It belongs to the pyridoxamine 5'-phosphate oxidase family. Homodimer. The cofactor is FMN.

It catalyses the reaction pyridoxamine 5'-phosphate + O2 + H2O = pyridoxal 5'-phosphate + H2O2 + NH4(+). It carries out the reaction pyridoxine 5'-phosphate + O2 = pyridoxal 5'-phosphate + H2O2. It functions in the pathway cofactor metabolism; pyridoxal 5'-phosphate salvage; pyridoxal 5'-phosphate from pyridoxamine 5'-phosphate: step 1/1. The protein operates within cofactor metabolism; pyridoxal 5'-phosphate salvage; pyridoxal 5'-phosphate from pyridoxine 5'-phosphate: step 1/1. Its function is as follows. Catalyzes the oxidation of either pyridoxine 5'-phosphate (PNP) or pyridoxamine 5'-phosphate (PMP) into pyridoxal 5'-phosphate (PLP). This Erythrobacter litoralis (strain HTCC2594) protein is Pyridoxine/pyridoxamine 5'-phosphate oxidase.